Reading from the N-terminus, the 349-residue chain is UPF0324 inner membrane protein YeiH (349 aa).

The Periplasmic segment spans residues 1-12; sequence MTNITLQKQHRT. The chain crosses the membrane as a helical span at residues 13 to 32; that stretch reads LWHFIPGLALSAVITGVALW. The Cytoplasmic portion of the chain corresponds to 33–35; that stretch reads GGS. A helical transmembrane segment spans residues 36–58; it reads IPAVAGAGFSALTLAILLGMVLG. Residues 59-99 lie on the Periplasmic side of the membrane; that stretch reads NTIYPHIWKSCDGGVLFAKQYLLRLGIILYGFRLTFSQIAD. The helical transmembrane segment at 100-122 threads the bilayer; sequence VGISGIIIDVLTLSSTFLLACFL. Over 123-131 the chain is Cytoplasmic; sequence GQKVFGLDK. Residues 132–151 form a helical membrane-spanning segment; sequence HTSWLIGAGSSICGAAAVLA. The Periplasmic portion of the chain corresponds to 152-162; that stretch reads TEPVVKAEASK. The chain crosses the membrane as a helical span at residues 163–185; it reads VTVAVATVVIFGTVAIFLYPAIY. Residues 186-261 are Cytoplasmic-facing; sequence PLMSQWFSPE…SGANSGEKSK (76 aa). The helical transmembrane segment at 262-283 threads the bilayer; the sequence is ITIPWFAILFIVVAIFNSFHLL. At 284–289 the chain is on the periplasmic side; the sequence is PQSVVN. The chain crosses the membrane as a helical span at residues 290–312; sequence MLVTLDTFLLAMAMAALGLTTHV. At 313 to 321 the chain is on the cytoplasmic side; that stretch reads SALKKAGAK. Residues 322-344 form a helical membrane-spanning segment; that stretch reads PLLMALVLFAWLIVGGGAINYVI. Over 345 to 349 the chain is Periplasmic; it reads QSVIA.

Belongs to the UPF0324 family.

It localises to the cell inner membrane. This Escherichia coli O157:H7 protein is UPF0324 inner membrane protein YeiH (yeiH).